The chain runs to 393 residues: Serine/threonine-protein phosphatase 2A activator 1 (393 aa).

The segment at glutamate 328–arginine 393 is disordered. 2 stretches are compositionally biased toward polar residues: residues glutamate 335–serine 356 and serine 365–phenylalanine 386. Serine 341 carries the post-translational modification Phosphoserine.

It belongs to the PTPA-type PPIase family. As to quaternary structure, interacts with the phosphatase PP2A-like catalytic subunits PPG1, PPH3 and SIT4. Forms a ternary complex with SIT4-TAP42.

It localises to the cytoplasm. The protein localises to the nucleus. The catalysed reaction is [protein]-peptidylproline (omega=180) = [protein]-peptidylproline (omega=0). PPIases accelerate the folding of proteins. It catalyzes the cis-trans isomerization of proline imidic peptide bonds in oligopeptides. Acts as a regulatory subunit for TAP42-associated PP2A-like phosphatases modulating their activity or substrate specificity, probably by inducing a conformational change in the catalytic subunit, a direct target of the PPIase. Can reactivate inactive phosphatase PP2A-phosphatase methylesterase complexes (PP2Ai) in presence of ATP and Mg(2+) by dissociating the inactive form from the complex. Involved in the regulation of cell cycle progression, mitotic spindle formation, bud morphogenesis and DNA repair. The sequence is that of Serine/threonine-protein phosphatase 2A activator 1 (RRD1) from Saccharomyces cerevisiae (strain ATCC 204508 / S288c) (Baker's yeast).